The sequence spans 190 residues: Dual-action ribosomal maturation protein DarP (190 aa).

Residues 1–31 form a disordered region; it reads MIHADHDDNLPDDEEGLPLPPSKSQRKRDMH.

It belongs to the DarP family.

The protein localises to the cytoplasm. Functionally, member of a network of 50S ribosomal subunit biogenesis factors which assembles along the 30S-50S interface, preventing incorrect 23S rRNA structures from forming. Promotes peptidyl transferase center (PTC) maturation. The polypeptide is Dual-action ribosomal maturation protein DarP (Aromatoleum aromaticum (strain DSM 19018 / LMG 30748 / EbN1) (Azoarcus sp. (strain EbN1))).